Here is a 286-residue protein sequence, read N- to C-terminus: ATP synthase gamma chain (286 aa).

Belongs to the ATPase gamma chain family. As to quaternary structure, F-type ATPases have 2 components, CF(1) - the catalytic core - and CF(0) - the membrane proton channel. CF(1) has five subunits: alpha(3), beta(3), gamma(1), delta(1), epsilon(1). CF(0) has three main subunits: a, b and c.

Its subcellular location is the cell inner membrane. Its function is as follows. Produces ATP from ADP in the presence of a proton gradient across the membrane. The gamma chain is believed to be important in regulating ATPase activity and the flow of protons through the CF(0) complex. The sequence is that of ATP synthase gamma chain from Solibacter usitatus (strain Ellin6076).